We begin with the raw amino-acid sequence, 188 residues long: Peptide deformylase (188 aa).

A disordered region spans residues 70–90 (AEPVACDHDGHHHHHQPTKKE). Fe cation is bound by residues C113 and H155. E156 is a catalytic residue. Position 159 (H159) interacts with Fe cation.

Belongs to the polypeptide deformylase family. Fe(2+) serves as cofactor.

It carries out the reaction N-terminal N-formyl-L-methionyl-[peptide] + H2O = N-terminal L-methionyl-[peptide] + formate. Its function is as follows. Removes the formyl group from the N-terminal Met of newly synthesized proteins. Requires at least a dipeptide for an efficient rate of reaction. N-terminal L-methionine is a prerequisite for activity but the enzyme has broad specificity at other positions. The protein is Peptide deformylase of Novosphingobium aromaticivorans (strain ATCC 700278 / DSM 12444 / CCUG 56034 / CIP 105152 / NBRC 16084 / F199).